A 120-amino-acid polypeptide reads, in one-letter code: UPF0344 protein LMHCC_0278 (120 aa).

Helical transmembrane passes span 3-23 (GYIH…ALLI), 33-53 (MLQM…IMMV), 62-82 (ILAI…EMLL), and 92-112 (GMFL…GFYL).

It belongs to the UPF0344 family.

Its subcellular location is the cell membrane. This Listeria monocytogenes serotype 4a (strain HCC23) protein is UPF0344 protein LMHCC_0278.